We begin with the raw amino-acid sequence, 340 residues long: Outer membrane protein B (340 aa).

A signal peptide spans 1-26 (MSSKLVNYLRLTFLSFLGIASTSLDA).

It belongs to the chlamydial OMP family.

Its subcellular location is the cell outer membrane. The sequence is that of Outer membrane protein B (ompB) from Chlamydia trachomatis serovar D (strain ATCC VR-885 / DSM 19411 / UW-3/Cx).